The chain runs to 367 residues: Phosphoribosylaminoimidazole-succinocarboxamide synthase (367 aa).

Belongs to the SAICAR synthetase family.

The catalysed reaction is 5-amino-1-(5-phospho-D-ribosyl)imidazole-4-carboxylate + L-aspartate + ATP = (2S)-2-[5-amino-1-(5-phospho-beta-D-ribosyl)imidazole-4-carboxamido]succinate + ADP + phosphate + 2 H(+). It participates in purine metabolism; IMP biosynthesis via de novo pathway; 5-amino-1-(5-phospho-D-ribosyl)imidazole-4-carboxamide from 5-amino-1-(5-phospho-D-ribosyl)imidazole-4-carboxylate: step 1/2. The sequence is that of Phosphoribosylaminoimidazole-succinocarboxamide synthase from Shewanella amazonensis (strain ATCC BAA-1098 / SB2B).